Here is a 250-residue protein sequence, read N- to C-terminus: Ubiquinone/menaquinone biosynthesis C-methyltransferase UbiE (250 aa).

S-adenosyl-L-methionine-binding positions include T73, D94, 122–123 (NA), and S139.

It belongs to the class I-like SAM-binding methyltransferase superfamily. MenG/UbiE family.

The catalysed reaction is a 2-demethylmenaquinol + S-adenosyl-L-methionine = a menaquinol + S-adenosyl-L-homocysteine + H(+). It catalyses the reaction a 2-methoxy-6-(all-trans-polyprenyl)benzene-1,4-diol + S-adenosyl-L-methionine = a 5-methoxy-2-methyl-3-(all-trans-polyprenyl)benzene-1,4-diol + S-adenosyl-L-homocysteine + H(+). The protein operates within quinol/quinone metabolism; menaquinone biosynthesis; menaquinol from 1,4-dihydroxy-2-naphthoate: step 2/2. It participates in cofactor biosynthesis; ubiquinone biosynthesis. Its function is as follows. Methyltransferase required for the conversion of demethylmenaquinol (DMKH2) to menaquinol (MKH2) and the conversion of 2-polyprenyl-6-methoxy-1,4-benzoquinol (DDMQH2) to 2-polyprenyl-3-methyl-6-methoxy-1,4-benzoquinol (DMQH2). In Francisella tularensis subsp. novicida (strain U112), this protein is Ubiquinone/menaquinone biosynthesis C-methyltransferase UbiE.